A 409-amino-acid chain; its full sequence is S-adenosylmethionine synthase (409 aa).

ATP is bound at residue 141–146 (GQGSAD).

Belongs to the AdoMet synthase 2 family. It depends on Mg(2+) as a cofactor.

The catalysed reaction is L-methionine + ATP + H2O = S-adenosyl-L-methionine + phosphate + diphosphate. It functions in the pathway amino-acid biosynthesis; S-adenosyl-L-methionine biosynthesis; S-adenosyl-L-methionine from L-methionine: step 1/1. Its function is as follows. Catalyzes the formation of S-adenosylmethionine from methionine and ATP. In Hyperthermus butylicus (strain DSM 5456 / JCM 9403 / PLM1-5), this protein is S-adenosylmethionine synthase.